We begin with the raw amino-acid sequence, 482 residues long: Bifunctional protein GlmU (482 aa).

Positions 1–241 (MTASTEAAVV…SALVTGVNDR (241 aa)) are pyrophosphorylase. UDP-N-acetyl-alpha-D-glucosamine-binding positions include 12-15 (LAAG), Lys26, Gln83, 88-89 (GT), 112-114 (SGD), Gly151, Glu166, Asn181, and Asn239. Asp114 contacts Mg(2+). Asn239 lines the Mg(2+) pocket. The interval 242–262 (VQLSDLGKVLNRRIVAAHQRA) is linker. The interval 263 to 482 (GVTIIDPGST…AARKALGDES (220 aa)) is N-acetyltransferase. Residues Arg344 and Lys362 each contribute to the UDP-N-acetyl-alpha-D-glucosamine site. His374 acts as the Proton acceptor in catalysis. UDP-N-acetyl-alpha-D-glucosamine contacts are provided by Tyr377 and Asn388. Acetyl-CoA is bound by residues Ala391, 397 to 398 (NY), Ser416, and Ala434. The interval 463-482 (KKRPGSAADKAARKALGDES) is disordered. Positions 472-482 (KAARKALGDES) are enriched in basic and acidic residues.

In the N-terminal section; belongs to the N-acetylglucosamine-1-phosphate uridyltransferase family. This sequence in the C-terminal section; belongs to the transferase hexapeptide repeat family. Homotrimer. Mg(2+) is required as a cofactor.

The protein localises to the cytoplasm. The enzyme catalyses alpha-D-glucosamine 1-phosphate + acetyl-CoA = N-acetyl-alpha-D-glucosamine 1-phosphate + CoA + H(+). It carries out the reaction N-acetyl-alpha-D-glucosamine 1-phosphate + UTP + H(+) = UDP-N-acetyl-alpha-D-glucosamine + diphosphate. It participates in nucleotide-sugar biosynthesis; UDP-N-acetyl-alpha-D-glucosamine biosynthesis; N-acetyl-alpha-D-glucosamine 1-phosphate from alpha-D-glucosamine 6-phosphate (route II): step 2/2. Its pathway is nucleotide-sugar biosynthesis; UDP-N-acetyl-alpha-D-glucosamine biosynthesis; UDP-N-acetyl-alpha-D-glucosamine from N-acetyl-alpha-D-glucosamine 1-phosphate: step 1/1. It functions in the pathway bacterial outer membrane biogenesis; LPS lipid A biosynthesis. Functionally, catalyzes the last two sequential reactions in the de novo biosynthetic pathway for UDP-N-acetylglucosamine (UDP-GlcNAc). The C-terminal domain catalyzes the transfer of acetyl group from acetyl coenzyme A to glucosamine-1-phosphate (GlcN-1-P) to produce N-acetylglucosamine-1-phosphate (GlcNAc-1-P), which is converted into UDP-GlcNAc by the transfer of uridine 5-monophosphate (from uridine 5-triphosphate), a reaction catalyzed by the N-terminal domain. This chain is Bifunctional protein GlmU, found in Mycolicibacterium smegmatis (strain ATCC 700084 / mc(2)155) (Mycobacterium smegmatis).